Here is a 216-residue protein sequence, read N- to C-terminus: 2',3'-cyclic-nucleotide 3'-phosphodiesterase (216 aa).

His39 serves as the catalytic Proton donor/acceptor. Thr41 contacts substrate. The Proton donor/acceptor role is filled by His137. Ser139 and Tyr142 together coordinate substrate.

This sequence belongs to the 2H phosphoesterase superfamily. CPD1 family.

The protein resides in the golgi apparatus. It catalyses the reaction a nucleoside 2',3'-cyclic phosphate + H2O = a nucleoside 2'-phosphate + H(+). In terms of biological role, involved in the metabolism of ADP-ribose 1',2'-cyclic phosphate which is produced as a consequence of tRNA splicing. The polypeptide is 2',3'-cyclic-nucleotide 3'-phosphodiesterase (CPD1) (Eremothecium gossypii (strain ATCC 10895 / CBS 109.51 / FGSC 9923 / NRRL Y-1056) (Yeast)).